The chain runs to 246 residues: tRNA (guanine-N(1)-)-methyltransferase (246 aa).

S-adenosyl-L-methionine contacts are provided by residues G113 and 132–137 (LGDFVV).

The protein belongs to the RNA methyltransferase TrmD family. Homodimer.

The protein resides in the cytoplasm. The catalysed reaction is guanosine(37) in tRNA + S-adenosyl-L-methionine = N(1)-methylguanosine(37) in tRNA + S-adenosyl-L-homocysteine + H(+). Functionally, specifically methylates guanosine-37 in various tRNAs. The chain is tRNA (guanine-N(1)-)-methyltransferase from Latilactobacillus sakei subsp. sakei (strain 23K) (Lactobacillus sakei subsp. sakei).